The primary structure comprises 341 residues: L-threonine 3-dehydrogenase (341 aa).

Cysteine 38 is a Zn(2+) binding site. Residues threonine 40 and histidine 43 each act as charge relay system in the active site. Zn(2+) contacts are provided by histidine 63, glutamate 64, cysteine 93, cysteine 96, cysteine 99, and cysteine 107. Residues isoleucine 175, aspartate 195, arginine 200, 262 to 264 (LGI), and 286 to 287 (IY) each bind NAD(+).

Belongs to the zinc-containing alcohol dehydrogenase family. As to quaternary structure, homotetramer. It depends on Zn(2+) as a cofactor.

It localises to the cytoplasm. It carries out the reaction L-threonine + NAD(+) = (2S)-2-amino-3-oxobutanoate + NADH + H(+). The protein operates within amino-acid degradation; L-threonine degradation via oxydo-reductase pathway; glycine from L-threonine: step 1/2. Its function is as follows. Catalyzes the NAD(+)-dependent oxidation of L-threonine to 2-amino-3-ketobutyrate. The protein is L-threonine 3-dehydrogenase of Idiomarina loihiensis (strain ATCC BAA-735 / DSM 15497 / L2-TR).